A 277-amino-acid polypeptide reads, in one-letter code: Large ribosomal subunit protein uL2c (277 aa).

The span at 1 to 11 (MNTRSYSTFTP) shows a compositional bias: polar residues. Disordered regions lie at residues 1–47 (MNTR…RNNS) and 254–277 (YSALGKKSRKRNKYSDVSILRRRK).

This sequence belongs to the universal ribosomal protein uL2 family. Part of the 50S ribosomal subunit.

The protein resides in the plastid. The protein localises to the chloroplast. In Cryptomeria japonica (Japanese cedar), this protein is Large ribosomal subunit protein uL2c (rpl2).